The chain runs to 265 residues: 3-methyl-2-oxobutanoate hydroxymethyltransferase (265 aa).

Mg(2+) is bound by residues Asp45 and Asp84. Residues 45–46 (DS), Asp84, and Lys112 contribute to the 3-methyl-2-oxobutanoate site. Residue Glu114 participates in Mg(2+) binding. The active-site Proton acceptor is Glu181.

It belongs to the PanB family. As to quaternary structure, homodecamer; pentamer of dimers. Mg(2+) serves as cofactor.

It localises to the cytoplasm. The enzyme catalyses 3-methyl-2-oxobutanoate + (6R)-5,10-methylene-5,6,7,8-tetrahydrofolate + H2O = 2-dehydropantoate + (6S)-5,6,7,8-tetrahydrofolate. The protein operates within cofactor biosynthesis; (R)-pantothenate biosynthesis; (R)-pantoate from 3-methyl-2-oxobutanoate: step 1/2. Catalyzes the reversible reaction in which hydroxymethyl group from 5,10-methylenetetrahydrofolate is transferred onto alpha-ketoisovalerate to form ketopantoate. The polypeptide is 3-methyl-2-oxobutanoate hydroxymethyltransferase (Wigglesworthia glossinidia brevipalpis).